Reading from the N-terminus, the 168-residue chain is Shikimate kinase (168 aa).

Residue 10–15 (GVGKTT) participates in ATP binding. Residue threonine 14 participates in Mg(2+) binding. Substrate contacts are provided by aspartate 32, arginine 56, and glycine 77. Arginine 115 provides a ligand contact to ATP. A substrate-binding site is contributed by arginine 133.

This sequence belongs to the shikimate kinase family. Monomer. Mg(2+) is required as a cofactor.

The protein localises to the cytoplasm. The catalysed reaction is shikimate + ATP = 3-phosphoshikimate + ADP + H(+). The protein operates within metabolic intermediate biosynthesis; chorismate biosynthesis; chorismate from D-erythrose 4-phosphate and phosphoenolpyruvate: step 5/7. Catalyzes the specific phosphorylation of the 3-hydroxyl group of shikimic acid using ATP as a cosubstrate. This Macrococcus caseolyticus (strain JCSC5402) (Macrococcoides caseolyticum) protein is Shikimate kinase.